Reading from the N-terminus, the 170-residue chain is Transmembrane protein 252 (170 aa).

2 consecutive transmembrane segments (helical) span residues 8-28 (ILCA…AFFI) and 40-60 (LIAA…GIFW). The segment at 112–147 (CPAEREASGIPPPLYTETGLEFQDGNDSHPEAPPSY) is disordered.

It is found in the membrane. The protein is Transmembrane protein 252 (TMEM252) of Homo sapiens (Human).